The following is a 161-amino-acid chain: Extracellular giant hemoglobin major globin subunit B1 (161 aa).

The N-terminal stretch at 1–16 (MTILVLFLSCAALASA) is a signal peptide. Residues 18 to 161 (CCSRGDAEVV…YIAAGIGAGL (144 aa)) form the Globin domain. C19 and C149 are joined by a disulfide. H112 serves as a coordination point for heme b.

Belongs to the globin family. In terms of assembly, the 400 kDa hemoglobin consists of a spherical 24-mer arranged as a double layer of dome-shaped dodecamers. Each dodecamer is composed of the 3-fold trimer of the tetramer A1-A2-B1-B2 having one intra-tetramer (A1-B2) disulfide bond and one inter-tetramer (B1-B2) disulfide bond per tetramer.

It localises to the secreted. The extracellular giant hemoglobin is able to bind and transport oxygen and sulfide simultaneously and reversibly at two different sites. This is Extracellular giant hemoglobin major globin subunit B1 (ghbB1) from Oligobrachia mashikoi (Beard worm).